Reading from the N-terminus, the 369-residue chain is MTTMTVPPSLLPLEPFPTAPDTRASTPHIRLHGLGKRYPGGVQALREIDLEIRRGEVFGIIGRSGAGKSSLIRTLNRLERPSEGQVLIDGEDIGGYDGQRLVALRRRIGMIFQHFNLMSAKTVRQNIALPLRVAGVPRARIEERVAGLLQLVGLEEKRDAYPAQLSGGQKQRVGIARALVHQPQILLCDEATSALDPESTQAILALLRDINRRLGLTIVLITHEMAVIREICDRVVVLECGRIVEQGEVWEVFGDPRHAVTRSLLGSLRAALPADLQARLRQAPGGGDPVLLDLQYTGASRRVPDLLAIARAIGQRVDLLHGGIERIQGRALGRLLLQVGAPPGELPGVLAKAALVADKVEVLGHVAHA.

The interval 1–26 is disordered; the sequence is MTTMTVPPSLLPLEPFPTAPDTRAST. The 237-residue stretch at 29–265 folds into the ABC transporter domain; that stretch reads IRLHGLGKRY…PRHAVTRSLL (237 aa). An ATP-binding site is contributed by 62 to 69; the sequence is GRSGAGKS.

This sequence belongs to the ABC transporter superfamily. Methionine importer (TC 3.A.1.24) family. As to quaternary structure, the complex is composed of two ATP-binding proteins (MetN), two transmembrane proteins (MetI) and a solute-binding protein (MetQ).

The protein resides in the cell inner membrane. The catalysed reaction is L-methionine(out) + ATP + H2O = L-methionine(in) + ADP + phosphate + H(+). It carries out the reaction D-methionine(out) + ATP + H2O = D-methionine(in) + ADP + phosphate + H(+). Its function is as follows. Part of the ABC transporter complex MetNIQ involved in methionine import. Responsible for energy coupling to the transport system. The protein is Methionine import ATP-binding protein MetN 1 of Pseudomonas aeruginosa (strain UCBPP-PA14).